We begin with the raw amino-acid sequence, 21 residues long: Buforin-2 (21 aa).

N6-(2-hydroxyisobutyryl)lysine; alternate is present on K21.

Belongs to the histone H2A family. As to expression, expressed by the skin glands.

It is found in the secreted. Its function is as follows. Antimicrobial peptide with potent activity against some Gram-positive and Gram-negative bacteria. Does not permeabilize membrane, but internalizes into bacterial cells and alter specific gene expression involved in bacterial resistance mechanisms. Has the ability to agglutinate E.coli, and lipid vesicles. Shows a weak hemolytic activity, and is not cytotoxic to monocytes. The polypeptide is Buforin-2 (Sphaenorhynchus lacteus (Orinoco lime treefrog)).